The sequence spans 110 residues: METIAKHRYARTSAQKARLVADLIRGKKVAAALEILTFTNKKAAALVKKVLESAIANAEHNDGADIDDLKVAKIFVDEGPSMKRVMPRAKGRADRILKRTSHITVVVSDR.

This sequence belongs to the universal ribosomal protein uL22 family. Part of the 50S ribosomal subunit.

Its function is as follows. This protein binds specifically to 23S rRNA; its binding is stimulated by other ribosomal proteins, e.g. L4, L17, and L20. It is important during the early stages of 50S assembly. It makes multiple contacts with different domains of the 23S rRNA in the assembled 50S subunit and ribosome. In terms of biological role, the globular domain of the protein is located near the polypeptide exit tunnel on the outside of the subunit, while an extended beta-hairpin is found that lines the wall of the exit tunnel in the center of the 70S ribosome. This chain is Large ribosomal subunit protein uL22, found in Pasteurella multocida (strain Pm70).